Consider the following 53-residue polypeptide: ComX pheromone (53 aa).

A propeptide spanning residues 1-46 (MQEMVGYLIKYPNVLREVMEGNACLLGVDKDQSECIINGFKGLEIY) is cleaved from the precursor. Residue tryptophan 51 is the site of 3'-geranyl-2',N2-cyclotryptophan attachment.

In terms of assembly, interacts directly with the sensor histidine kinase ComP and stimulates its activity. In terms of processing, trp-51 is modified by geranylation, which is essential for activity. Modified by the tryptophan prenyltransferase ComQ before export to the extracellular environment. The type of isoprenyl derivative differs among the different pherotypes and depends on ComX primary sequence.

Its subcellular location is the secreted. Part of a major quorum-sensing system that regulates the development of genetic competence. Acts through the activation of the two-component regulatory system ComP/ComA composed of a sensor histidine kinase, ComP, and a response regulator, ComA. This chain is ComX pheromone, found in Bacillus mojavensis.